A 407-amino-acid polypeptide reads, in one-letter code: SERPINE1 mRNA-binding protein 1 (407 aa).

A Phosphoserine modification is found at Ser25. The segment at 33–227 (AAENKKKEAG…GSGSHNWGTV (195 aa)) is disordered. Over residues 51–68 (AKSAAQAAAQTNSNAAGK) the composition is skewed to low complexity. Lys52 carries the post-translational modification N6-acetyllysine; alternate. Residue Lys52 forms a Glycyl lysine isopeptide (Lys-Gly) (interchain with G-Cter in SUMO1); alternate linkage. Lys68 bears the N6-acetyllysine mark. 3 stretches are compositionally biased toward basic and acidic residues: residues 70–80 (LRKESQKDRKN), 89–114 (ADKK…RRPD), and 122–162 (KLID…ERPI). Residue Lys102 forms a Glycyl lysine isopeptide (Lys-Gly) (interchain with G-Cter in SUMO2) linkage. N6-acetyllysine is present on residues Lys122 and Lys140. The span at 164-182 (GRGGLGRGRGGRGRGMGRG) shows a compositional bias: gly residues. Arg165 and Arg188 each carry omega-N-methylarginine. The segment covering 183-199 (DGFDSRGKREFDRHSGS) has biased composition (basic and acidic residues). Ser197, Ser199, Ser203, Ser205, and Ser208 each carry phosphoserine. An N6-acetyllysine; alternate modification is found at Lys211. Lys211 is covalently cross-linked (Glycyl lysine isopeptide (Lys-Gly) (interchain with G-Cter in SUMO2); alternate). Arg216 carries the post-translational modification Omega-N-methylarginine. A Phosphoserine modification is found at Ser221. Thr226 carries the phosphothreonine modification. Lys228 participates in a covalent cross-link: Glycyl lysine isopeptide (Lys-Gly) (interchain with G-Cter in SUMO1); alternate. Lys228 participates in a covalent cross-link: Glycyl lysine isopeptide (Lys-Gly) (interchain with G-Cter in SUMO2); alternate. Residues Leu231, Ser234, and Tyr237 each carry the phosphoserine modification. Residue Ser234 is modified to Phosphothreonine. Position 240 is a phosphothreonine (Lys240). Polar residues predominate over residues 242–256 (ISYNCSDLDQSNVTE). Disordered regions lie at residues 242 to 288 (ISYN…KEMT) and 327 to 407 (SKSE…PALA). Residues 261–274 (GEEHPVADTENKEN) show a composition bias toward basic and acidic residues. Lys280 participates in a covalent cross-link: Glycyl lysine isopeptide (Lys-Gly) (interchain with G-Cter in SUMO2). Basic and acidic residues predominate over residues 327-341 (SKSEEAHAEDSVMDH). Residue Lys328 is modified to N6-acetyllysine. Residue Ser329 is modified to Phosphoserine. A compositionally biased stretch (gly residues) spans 362–371 (GRPGRGGRGG). Omega-N-methylarginine occurs at positions 363, 366, and 369. Residues Ser391 and Ser393 each carry the phosphoserine modification.

This sequence belongs to the SERBP1-HABP4 family. Associates with mature 80S ribosomes. Interacts with EEF2/eEF2; interaction sequesters EEF2/eEF2 at the A-site of the ribosome, thereby blocking the interaction sites of the mRNA-tRNA complex, promoting ribosome stabilization and hibernation. Interacts with SPIN1. Interacts with CHD3 and TDRD3. Interacts with ZDHHC17 (via ANK repeats). Phosphorylation by MTOR inhibits SERBP1 and relieves ribosome hibernation.

It is found in the cytoplasm. The protein resides in the nucleus. It localises to the perinuclear region. In terms of biological role, ribosome-binding protein that promotes ribosome hibernation, a process during which ribosomes are stabilized in an inactive state and preserved from proteasomal degradation. Acts via its association with EEF2/eEF2 factor, sequestering EEF2/eEF2 at the A-site of the ribosome and promoting ribosome stabilization and storage in an inactive state. May also play a role in the regulation of mRNA stability: binds to the 3'-most 134 nt of the SERPINE1/PAI1 mRNA, a region which confers cyclic nucleotide regulation of message decay. Seems to play a role in PML-nuclear bodies formation. The chain is SERPINE1 mRNA-binding protein 1 from Mus musculus (Mouse).